The chain runs to 212 residues: ATP-dependent dethiobiotin synthetase BioD (212 aa).

13–18 (GIGKTV) contacts ATP. Residue Thr-17 participates in Mg(2+) binding. Residue Lys-33 is part of the active site. Residue Ser-37 participates in substrate binding. Glu-100 contributes to the Mg(2+) binding site. Residues 100–103 (EGAG) and 184–186 (PLL) each bind ATP.

Belongs to the dethiobiotin synthetase family. Homodimer. It depends on Mg(2+) as a cofactor.

It localises to the cytoplasm. It carries out the reaction (7R,8S)-7,8-diammoniononanoate + CO2 + ATP = (4R,5S)-dethiobiotin + ADP + phosphate + 3 H(+). It participates in cofactor biosynthesis; biotin biosynthesis; biotin from 7,8-diaminononanoate: step 1/2. Its function is as follows. Catalyzes a mechanistically unusual reaction, the ATP-dependent insertion of CO2 between the N7 and N8 nitrogen atoms of 7,8-diaminopelargonic acid (DAPA, also called 7,8-diammoniononanoate) to form a ureido ring. The chain is ATP-dependent dethiobiotin synthetase BioD from Brucella canis (strain ATCC 23365 / NCTC 10854 / RM-666).